The sequence spans 397 residues: Lysophospholipid transporter LplT (397 aa).

The Periplasmic segment spans residues 1–17 (MSESVHTNTSLWSKGMK). Residues 18-38 (AVIVAQFLSAFGDNALLFATL) form a helical membrane-spanning segment. At 39-52 (ALLKAQFYPEWSQP) the chain is on the cytoplasmic side. Residues 53–73 (VLQMVFVGAYILFAPFVGQVA) traverse the membrane as a helical segment. Over 74 to 90 (DSFAKGRVMMFANGLKL) the chain is Periplasmic. A helical membrane pass occupies residues 91 to 111 (LGAASICFGFNPFVGYTLVGI). The Cytoplasmic portion of the chain corresponds to 112 to 144 (GAAAYSPAKYGILGELTTGDKLVKANGLMEAST). The helical transmembrane segment at 145–165 (IAAILLGSVAGGVLADLHVLV) threads the bilayer. A topological domain (periplasmic) is located at residue Ala166. Residues 167–187 (LAACALAYAGAVAANIYIPKL) traverse the membrane as a helical segment. Over 188-226 (AAARPGQSWNVLKMTCSFKSACTSLWQNGETRFSLVGTS) the chain is Cytoplasmic. Residues 227 to 247 (LFWGAGVTLRFLLVLWVPVAL) form a helical membrane-spanning segment. The Periplasmic portion of the chain corresponds to 248 to 256 (GITDNATPT). The chain crosses the membrane as a helical span at residues 257-277 (YLNAMVAIGIVLGAGAAAKLV). Over 278–280 (TLE) the chain is Cytoplasmic. A helical membrane pass occupies residues 281 to 301 (TVSRCMPAGILIGVVVLFFSL). Residues 302-304 (QHE) lie on the Periplasmic side of the membrane. The helical transmembrane segment at 305–325 (LLPAYALLMLIGVLGGFFVVP) threads the bilayer. Residues 326–343 (LNALLQERGKKSVGAGNA) lie on the Cytoplasmic side of the membrane. A helical transmembrane segment spans residues 344-364 (IAVQNLGENSAMLLMLGIYSL). The Periplasmic portion of the chain corresponds to 365-366 (AV). A helical membrane pass occupies residues 367-387 (LVGIPVVPIGIGFGTLFALAI). Topologically, residues 388 to 397 (TALWIWQRRH) are cytoplasmic.

This sequence belongs to the major facilitator superfamily. LplT (TC 2.A.1.42) family.

It is found in the cell inner membrane. Functionally, catalyzes the facilitated diffusion of 2-acyl-glycero-3-phosphoethanolamine (2-acyl-GPE) into the cell. This is Lysophospholipid transporter LplT from Escherichia fergusonii (strain ATCC 35469 / DSM 13698 / CCUG 18766 / IAM 14443 / JCM 21226 / LMG 7866 / NBRC 102419 / NCTC 12128 / CDC 0568-73).